The sequence spans 75 residues: MARYFRRRKFCRFTAEGVAEIDYKDIATLKNYITESGKIVPSRITGTSAKYQRQLARAIKRARYLSLLPYTDLHQ.

It belongs to the bacterial ribosomal protein bS18 family. In terms of assembly, part of the 30S ribosomal subunit. Forms a tight heterodimer with protein bS6.

Functionally, binds as a heterodimer with protein bS6 to the central domain of the 16S rRNA, where it helps stabilize the platform of the 30S subunit. The protein is Small ribosomal subunit protein bS18 of Shewanella amazonensis (strain ATCC BAA-1098 / SB2B).